The primary structure comprises 482 residues: O-acyltransferase ausP (482 aa).

Catalysis depends on proton acceptor residues His-180 and Asp-412.

The protein belongs to the plant acyltransferase family. Monomer.

The protein operates within secondary metabolite biosynthesis; terpenoid biosynthesis. In terms of biological role, O-acyltransferase; part of the gene cluster B that mediates the biosynthesis of the fungal meroterpenoid acetoxydehydroaustin. The first step of the pathway is the synthesis of 3,5-dimethylorsellinic acid by the polyketide synthase ausA. 3,5-dimethylorsellinic acid is then prenylated by the polyprenyl transferase ausN. Further epoxidation by the FAD-dependent monooxygenase ausM and cyclization by the probable terpene cyclase ausL lead to the formation of protoaustinoid A. Protoaustinoid A is then oxidized to spiro-lactone preaustinoid A3 by the combined action of the FAD-binding monooxygenases ausB and ausC, and the dioxygenase ausE. Acid-catalyzed keto-rearrangement and ring contraction of the tetraketide portion of preaustinoid A3 by ausJ lead to the formation of preaustinoid A4. The aldo-keto reductase ausK, with the help of ausH, is involved in the next step by transforming preaustinoid A4 into isoaustinone which is in turn hydroxylated by the P450 monooxygenase ausI to form austinolide. The cytochrome P450 monooxygenase ausG then modifies austinolide to austinol. Austinol is further acetylated to austin by the O-acetyltransferase ausP, which spontaneously changes to dehydroaustin. The cytochrome P450 monooxygenase then converts dehydroaustin is into 7-dehydrodehydroaustin. The hydroxylation catalyzed by ausR permits the second O-acetyltransferase ausQ to add an additional acetyl group to the molecule, leading to the formation of acetoxydehydroaustin. Due to genetic rearrangements of the clusters and the subsequent loss of some enzymes, the end product of the Penicillium brasilianum austinoid biosynthesis clusters is acetoxydehydroaustin. In Penicillium brasilianum, this protein is O-acyltransferase ausP.